Consider the following 123-residue polypeptide: S-adenosylmethionine decarboxylase proenzyme 2 (123 aa).

Residue S65 is the Schiff-base intermediate with substrate; via pyruvic acid of the active site. A Pyruvic acid (Ser); by autocatalysis modification is found at S65. Residue H70 is the Proton acceptor; for processing activity of the active site. C85 acts as the Proton donor; for catalytic activity in catalysis.

The protein belongs to the prokaryotic AdoMetDC family. Type 1 subfamily. As to quaternary structure, heterotetramer of two alpha and two beta chains arranged as a dimer of alpha/beta heterodimers. The cofactor is pyruvate. Post-translationally, is synthesized initially as an inactive proenzyme. Formation of the active enzyme involves a self-maturation process in which the active site pyruvoyl group is generated from an internal serine residue via an autocatalytic post-translational modification. Two non-identical subunits are generated from the proenzyme in this reaction, and the pyruvate is formed at the N-terminus of the alpha chain, which is derived from the carboxyl end of the proenzyme. The post-translation cleavage follows an unusual pathway, termed non-hydrolytic serinolysis, in which the side chain hydroxyl group of the serine supplies its oxygen atom to form the C-terminus of the beta chain, while the remainder of the serine residue undergoes an oxidative deamination to produce ammonia and the pyruvoyl group blocking the N-terminus of the alpha chain.

It catalyses the reaction S-adenosyl-L-methionine + H(+) = S-adenosyl 3-(methylsulfanyl)propylamine + CO2. It functions in the pathway amine and polyamine biosynthesis; S-adenosylmethioninamine biosynthesis; S-adenosylmethioninamine from S-adenosyl-L-methionine: step 1/1. In terms of biological role, catalyzes the decarboxylation of S-adenosylmethionine to S-adenosylmethioninamine (dcAdoMet), the propylamine donor required for the synthesis of the polyamines spermine and spermidine from the diamine putrescine. The protein is S-adenosylmethionine decarboxylase proenzyme 2 of Bacillus cereus (strain ZK / E33L).